Consider the following 184-residue polypeptide: Large ribosomal subunit protein uL5 (184 aa).

It belongs to the universal ribosomal protein uL5 family. Part of the 50S ribosomal subunit; part of the 5S rRNA/L5/L18/L25 subcomplex. Contacts the 5S rRNA and the P site tRNA. Forms a bridge to the 30S subunit in the 70S ribosome.

Its function is as follows. This is one of the proteins that bind and probably mediate the attachment of the 5S RNA into the large ribosomal subunit, where it forms part of the central protuberance. In the 70S ribosome it contacts protein S13 of the 30S subunit (bridge B1b), connecting the 2 subunits; this bridge is implicated in subunit movement. Contacts the P site tRNA; the 5S rRNA and some of its associated proteins might help stabilize positioning of ribosome-bound tRNAs. This chain is Large ribosomal subunit protein uL5, found in Pelagibacter ubique (strain HTCC1062).